A 294-amino-acid polypeptide reads, in one-letter code: MVPKVVDLQRIANDKTRITTYKKRKASLYKKAQEFSTLCGVETCLIVYGPTKATDVVISEPEIWPKDETKVRAIIRKYKDTVSTSCRKETNVETFVNDVGKGNEVVTKKRVKRENKYSSWEEKLDKCSREQLHGIFCAVDSKLNEAVTRQERSMFRVNHQAMDTPFPQNLMDQQFMPQYFHEQPQFQGFPNNFNNMGFSLISPHDGQIQMDPNLMEKWTDLALTQSLMMSKGNDGTQFMQRQEQPYYNREQVVSRSAGFNVNPFMGYQVPFNIPNWRLSGNQVENWELSGKKTI.

The MADS-box domain maps to 1–51 (MVPKVVDLQRIANDKTRITTYKKRKASLYKKAQEFSTLCGVETCLIVYGPT).

As to quaternary structure, interacts with MEE14/CBP1.

It is found in the nucleus. Probable transcription factor that may function in the maintenance of the proper function of the central cell in pollen tube attraction. In Arabidopsis thaliana (Mouse-ear cress), this protein is Agamous-like MADS-box protein AGL82.